Here is a 1993-residue protein sequence, read N- to C-terminus: MEERKQETTNQAHVLFDRFVQATTCKGTLRAFQELCDHLELKPKDYRSFYHKLKSKLNYWKAKALWAKLDKRGSHKDYKKGKACTNTKCLIIGAGPCGLRTAIDLSLLGAKVVVIEKRDAFSRNNVLHLWPFTIHDLRGLGAKKFYGKFCAGAIDHISIRQLQLILLKVALILGIEIHVNVEFQGLVQPPEDQENERIGWRALVHPKTHPVSEYEFEVIIGGDGRRNTLEGFRRKEFRGKLAIAITANFINRNTTAEAKVEEISGVAFIFNQKFFQELREATGIDLENIVYYKDDTHYFVMTAKKQSLLDKGVILHDYTDTELLLSRENVDQEALLNYAREAADFSTQQQLPSLDFAINHYGQPDVAMFDFTCMYASENAALVREQNGHQLLVALVGDSLLEPFWPMGTGIARGFLAAMDSAWMVRSWSLGTSPLEVLAERESIYRLLPQTTPENVSKNFSQYSIDPVTRYPNININFLRPSQVRHLYDSGETKDIHLEMENMVNPRTTPKLTRNESVARSSKLLGWCQRQTEGYSGVNVTDLTMSWKSGLALCAIIHRYRPDLIDFDSLDEQNVEKNNQLAFDIAEKELGISPIMTGKEMASVGEPDKLSMVMYLTQFYEMFKDSLSSSDTLDLNAEEKAVLIASTKSPISFLSKLGQTISRKRSPKDKKEKDSDGAGKRRKTSQSEEEEPPRSYKGERPTLVSTLTDRRMDAAVGNQNKVKYMATQLLAKFEENAPAQSTGVRRQGSIKKEFPQNLGGSDTCYFCQKRVYVMERLSAEGKFFHRSCFKCEYCATTLRLSAYAYDIEDGKFYCKPHYCYRLSGYAQRKRPAVAPLSGKEVKGALQDGPTADANGLASVAASSAERSPGTSMNGLEEPSIAKRLRGTPERIELENYRRSVRQVEELEEVPEETQAEHNLSSVLDKGTEEDVASSSSESEMEEEEEEDDEDDHLPTSDLGGVPWKEAVRIHALLKGRSEEELEASKNFEPEEEEEEEEYEEEDEEYEEEEEEESSEAGNKRLQQIITAADPLAIQADVHWTHIREREAEERMLPTSESSTSRAPLDEDDLEEDADSEPAETEGEAAEDGDPGDTGAELDDQHWSDDIPSDAEAEHRLQSQAKVKAELELRVSENEEEKPSDAPKQEERGTSQVSSPSQPPEKQVGVFSPARSPGTEEAKSPLATKVKSPEEPLFPTPLLLREKPKAEVPEEQKAVLSPIRSQPVALPEARSPTSPTSLQPESLLAPPTPPTPPPTQLPICSQPQPSSDASIPSPTKSPIRFQPVPAKTSTPLTPLPVKSQGDPKDRLSGPLAVEEVLKRSDLVEEFWMKSAEIRRSLGLTPVDRSKGSEPSLPSPASKPISLKSYSVDKSPQDEGLCLLKPPSVPKRLGLPKSAGDQPPLLTPKSPSDKELRSSQEERRDLSSSSGLGLHDSSSNMKTLGSQSFNTSDSTMLTPPSSPPPPPPPNEEPATLRRKPHQTFERREASIIPPPTPASFMRPPREPAQPPREEVRKSFVESVDEIPFADDVEDTYDDKTEDSSLQEKFFTPPSCWSRSEKLQAKENGRLPPLEQDVPPQKRGLPLVSAEAKELAEERMRAREKSVKSQALRDAMAKQLSRMQAMEMVSSRSHTAQSQGKELGSESTRHPSLRGTQEPTLKHEATSEEILSPPSDSGGPDGSVTSSEGSSGKSKKRSSLFSPRRNKKEKKTKGEARPPEKPSPGLPEDVVAKPKSLWKSVFSGYKKDKKKKSDEKSCSSTPSSGATVDSGQRRASPMVRAELQLRRQLSFSEDSDLSSDDILERSSQKSKREPRTYTEEELSAKLTRRVQKAARRQAKQEELKRLHRAQIIQRQLEQVEEKQRQLEERGVAVEKALRGEAGMGKKDDPKLMQEWFKLVQEKNAMVRYESELMIFARELELEDRQSRLQQELRERMAVEDHLKTEGELSEEKKILNEMLEVVEQRDSLVALLEEQRLREKEEDKDLEAAMLCKGFSLDWS.

The interval 2–494 (EERKQETTNQ…RHLYDSGETK (493 aa)) is monooxygenase domain. FAD-binding positions include Cys97, 116-118 (EKR), 123-125 (RNN), Phe183, Tyr298, and Asp398. Positions 518–624 (VARSSKLLGW…YLTQFYEMFK (107 aa)) constitute a Calponin-homology (CH) domain. Phosphoserine is present on Ser649. A disordered region spans residues 658 to 704 (GQTISRKRSPKDKKEKDSDGAGKRRKTSQSEEEEPPRSYKGERPTLV). Residues 669–679 (DKKEKDSDGAG) show a composition bias toward basic and acidic residues. 2 positions are modified to phosphoserine: Ser685 and Ser687. Positions 762 to 824 (DTCYFCQKRV…KPHYCYRLSG (63 aa)) constitute an LIM zinc-binding domain. Zn(2+) contacts are provided by Cys764, Cys767, His785, Cys788, Cys791, Cys794, Cys814, and His817. The tract at residues 854–886 (NGLASVAASSAERSPGTSMNGLEEPSIAKRLRG) is disordered. The span at 860–873 (AASSAERSPGTSMN) shows a compositional bias: polar residues. Thr887 carries the post-translational modification Phosphothreonine. 4 disordered regions span residues 905-1023 (ELEE…RLQQ), 1039-1309 (WTHI…LSGP), 1332-1546 (IRRS…FFTP), and 1559-1837 (KENG…EELK). A compositionally biased stretch (acidic residues) spans 938 to 951 (SEMEEEEEEDDEDD). The span at 975–988 (GRSEEELEASKNFE) shows a compositional bias: basic and acidic residues. Ser977 bears the Phosphoserine mark. Over residues 989–1014 (PEEEEEEEEYEEEDEEYEEEEEEESS) the composition is skewed to acidic residues. Basic and acidic residues predominate over residues 1039–1051 (WTHIREREAEERM). Residues 1065–1090 (DEDDLEEDADSEPAETEGEAAEDGDP) show a composition bias toward acidic residues. Positions 1111–1148 (EAEHRLQSQAKVKAELELRVSENEEEKPSDAPKQEERG) are enriched in basic and acidic residues. 2 positions are modified to phosphoserine: Ser1131 and Ser1187. The span at 1199–1212 (LREKPKAEVPEEQK) shows a compositional bias: basic and acidic residues. A compositionally biased stretch (polar residues) spans 1230–1239 (SPTSPTSLQP). The span at 1245 to 1255 (PPTPPTPPPTQ) shows a compositional bias: pro residues. Polar residues predominate over residues 1257-1275 (PICSQPQPSSDASIPSPTK). Ser1272 bears the Phosphoserine mark. Residue Thr1274 is modified to Phosphothreonine. Phosphoserine occurs at positions 1276 and 1335. The residue at position 1339 (Thr1339) is a Phosphothreonine. A phosphoserine mark is found at Ser1369 and Ser1382. The segment covering 1405 to 1420 (PSDKELRSSQEERRDL) has biased composition (basic and acidic residues). Residues 1421–1433 (SSSSGLGLHDSSS) are compositionally biased toward low complexity. Phosphoserine is present on Ser1431. Over residues 1434–1452 (NMKTLGSQSFNTSDSTMLT) the composition is skewed to polar residues. At Thr1452 the chain carries Phosphothreonine. The segment covering 1454–1465 (PSSPPPPPPPNE) has biased composition (pro residues). A compositionally biased stretch (acidic residues) spans 1516-1530 (SVDEIPFADDVEDTY). Positions 1584–1600 (EAKELAEERMRAREKSV) are enriched in basic and acidic residues. A compositionally biased stretch (polar residues) spans 1623-1633 (SSRSHTAQSQG). Ser1640 carries the post-translational modification Phosphoserine. Residues 1665 to 1685 (SPPSDSGGPDGSVTSSEGSSG) are compositionally biased toward low complexity. Basic residues predominate over residues 1686 to 1704 (KSKKRSSLFSPRRNKKEKK). A phosphoserine mark is found at Ser1692 and Ser1695. Residues 1754 to 1763 (TPSSGATVDS) show a composition bias toward polar residues. The span at 1795-1811 (ILERSSQKSKREPRTYT) shows a compositional bias: basic and acidic residues. The stretch at 1817–1983 (AKLTRRVQKA…EEDKDLEAAM (167 aa)) forms a coiled coil. The span at 1819–1830 (LTRRVQKAARRQ) shows a compositional bias: basic residues. Residues 1832–1981 (KQEELKRLHR…EKEEDKDLEA (150 aa)) enclose the bMERB domain. The residue at position 1903 (Ser1903) is a Phosphoserine.

This sequence belongs to the Mical family. Interacts with RAB1B, RAB8A, RAB10, RAB13 and RAB15 (in their GTP-bound forms); binding to RAB1B is of low affinity compared to other Rab proteins; at least in case of RAB8A can bind 2 molecules of RAB8A simultaneously through a high and a low affinity binding site, respectively. Interacts with ERC1 and RAB8A; may bridge ERC1 with RAB8A. Interacts with KIF23 and ERC1; enhances the interaction between KIF23 and ERC1. Interacts with NINL. The cofactor is FAD.

Its subcellular location is the cytoplasm. The protein resides in the cell cortex. The protein localises to the cytoskeleton. It is found in the nucleus. It localises to the midbody. Its subcellular location is the spindle. The protein resides in the cilium basal body. It catalyses the reaction L-methionyl-[F-actin] + NADPH + O2 + H(+) = L-methionyl-(R)-S-oxide-[F-actin] + NADP(+) + H2O. Functionally, monooxygenase that promotes depolymerization of F-actin by mediating oxidation of specific methionine residues on actin to form methionine-sulfoxide, resulting in actin filament disassembly and preventing repolymerization. In the absence of actin, it also functions as a NADPH oxidase producing H(2)O(2). Seems to act as Rab effector protein and play a role in vesicle trafficking. Involved in exocytic vesicles tethering and fusion: the monooxygenase activity is required for this process and implicates RAB8A associated with exocytotic vesicles. Required for cytokinesis. Contributes to stabilization and/or maturation of the intercellular bridge independently of its monooxygenase activity. Promotes recruitment of Rab8 and ERC1 to the intercellular bridge, and together these proteins are proposed to function in timely abscission. The sequence is that of [F-actin]-monooxygenase MICAL3 (Mical3) from Mus musculus (Mouse).